Reading from the N-terminus, the 207-residue chain is 3-isopropylmalate dehydratase small subunit (207 aa).

The protein belongs to the LeuD family. LeuD type 1 subfamily. In terms of assembly, heterodimer of LeuC and LeuD.

It carries out the reaction (2R,3S)-3-isopropylmalate = (2S)-2-isopropylmalate. Its pathway is amino-acid biosynthesis; L-leucine biosynthesis; L-leucine from 3-methyl-2-oxobutanoate: step 2/4. Its function is as follows. Catalyzes the isomerization between 2-isopropylmalate and 3-isopropylmalate, via the formation of 2-isopropylmaleate. The sequence is that of 3-isopropylmalate dehydratase small subunit from Rhodospirillum rubrum (strain ATCC 11170 / ATH 1.1.1 / DSM 467 / LMG 4362 / NCIMB 8255 / S1).